Reading from the N-terminus, the 329-residue chain is Tyrosine--tRNA ligase (329 aa).

Positions 31, 157, 161, 164, and 179 each coordinate L-tyrosine. Residues 220-224 carry the 'KMSKS' region motif; that stretch reads KMSKS. ATP is bound at residue Lys-223.

It belongs to the class-I aminoacyl-tRNA synthetase family. TyrS type 4 subfamily. Homodimer.

Its subcellular location is the cytoplasm. It carries out the reaction tRNA(Tyr) + L-tyrosine + ATP = L-tyrosyl-tRNA(Tyr) + AMP + diphosphate + H(+). Its function is as follows. Catalyzes the attachment of tyrosine to tRNA(Tyr) in a two-step reaction: tyrosine is first activated by ATP to form Tyr-AMP and then transferred to the acceptor end of tRNA(Tyr). The polypeptide is Tyrosine--tRNA ligase (Picrophilus torridus (strain ATCC 700027 / DSM 9790 / JCM 10055 / NBRC 100828 / KAW 2/3)).